A 150-amino-acid chain; its full sequence is Transcriptional repressor NrdR (150 aa).

A zinc finger lies at 3 to 34 (CPFCGYEDTFVIDTREIEDQRVIRRRRECPNC). The ATP-cone domain occupies 49 to 139 (IMVIKKDGRR…VYQEFSSLEE (91 aa)).

It belongs to the NrdR family. It depends on Zn(2+) as a cofactor.

Negatively regulates transcription of bacterial ribonucleotide reductase nrd genes and operons by binding to NrdR-boxes. The protein is Transcriptional repressor NrdR of Dictyoglomus thermophilum (strain ATCC 35947 / DSM 3960 / H-6-12).